The following is a 470-amino-acid chain: Homogentisate 1,2-dioxygenase (470 aa).

Residues histidine 356, glutamate 362, and histidine 392 each coordinate Fe cation.

It belongs to the homogentisate dioxygenase family. Fe cation is required as a cofactor.

It catalyses the reaction homogentisate + O2 = 4-maleylacetoacetate + H(+). Its pathway is amino-acid degradation; L-phenylalanine degradation; acetoacetate and fumarate from L-phenylalanine: step 4/6. The protein is Homogentisate 1,2-dioxygenase (HGO) of Oryza sativa subsp. japonica (Rice).